The primary structure comprises 143 residues: Transcriptional regulator MraZ (143 aa).

SpoVT-AbrB domains follow at residues 5 to 47 and 76 to 119; these read EYRH…PQSE and ASEC…SKTL.

It belongs to the MraZ family. Forms oligomers.

Its subcellular location is the cytoplasm. It is found in the nucleoid. This is Transcriptional regulator MraZ from Shouchella clausii (strain KSM-K16) (Alkalihalobacillus clausii).